Here is a 495-residue protein sequence, read N- to C-terminus: UDP-N-acetylmuramate--L-alanine ligase (495 aa).

Residue 120–126 participates in ATP binding; sequence GSHGKTT.

It belongs to the MurCDEF family.

The protein localises to the cytoplasm. The catalysed reaction is UDP-N-acetyl-alpha-D-muramate + L-alanine + ATP = UDP-N-acetyl-alpha-D-muramoyl-L-alanine + ADP + phosphate + H(+). The protein operates within cell wall biogenesis; peptidoglycan biosynthesis. In terms of biological role, cell wall formation. This chain is UDP-N-acetylmuramate--L-alanine ligase, found in Rickettsia prowazekii (strain Madrid E).